We begin with the raw amino-acid sequence, 274 residues long: Large ribosomal subunit protein uL2cz/uL2cy (274 aa).

A disordered region spans residues 224 to 274 (NPVDHPHGGGEGRAPIGRKKPATPWGYPALGRRSRKRNKYSDNLILRRRSK).

It belongs to the universal ribosomal protein uL2 family. In terms of assembly, part of the 50S ribosomal subunit.

The protein resides in the plastid. It is found in the chloroplast. This Carica papaya (Papaya) protein is Large ribosomal subunit protein uL2cz/uL2cy (rpl2-A).